Here is a 362-residue protein sequence, read N- to C-terminus: Heat-inducible transcription repressor HrcA (362 aa).

Belongs to the HrcA family.

In terms of biological role, negative regulator of class I heat shock genes (grpE-dnaK-dnaJ and groELS operons). Prevents heat-shock induction of these operons. This Nitrobacter hamburgensis (strain DSM 10229 / NCIMB 13809 / X14) protein is Heat-inducible transcription repressor HrcA.